Here is a 1430-residue protein sequence, read N- to C-terminus: MAPAIDSTVNDLQPNTPNPEKALSSQAQAFVRAYSEDGDSGGQSVLGAEDPLSPLNPRGERFNARAWAKNLAAVTRERGEGFRQVGISFQNVNVFGYGTPTDFQKNVGNVWLALPAMIRQLFAPKGGQTRIDILNHFNGLVRPGEMCVVLGPPGSGCSTFLKTISGHTSGLHVNPDAHFNYQGLSAKEMITAHRGDCIYTAEVDVHFPMLTVGETLTFAARARSQQHLPEGISRNNYCDQLRDVIMAMYGIRHTIHTKVGDDFVRGVSGGERKRVSVAEATLANAPFQCWDNSTRGLDSANAIEFCRTLRLQSEIFGQTCVVSMYQAPQTAYDLFDKVLLIYEGRQIYFGSTSKAKDYFVNLGFECPARQTTPDFLTSITFPAERIPRPDCQPPRTPDEFSQVWKNSLECKALQDEINEYNMEHPINGPDADTFRQLKQASQAQGQKVTSPFTLTYSQQVKLCMWRGWARFKADPWPAVWVMVGNTIMALIMSSLFYNMGQDTNSFYGRSVVLFMAILFNAFSSILEVMTLYAQRPIVEKQSRYAFYHPSAEAYASVLVDMPMKITSTISFNLVFYFMTNLNRAPGNFFFYLLVVFLIVLAMSGVFRFIGSLSRTEQQAMVPASVLMLALLIFTGFVVPVDYMLPWCRWINYVNPVAYGYEALMVNEFHGREFTCSTYIPEYANATSGTGACSVVGATPGNLFWRNVGIIIAMVIFNYLMYFIASEYVTAKKSRGEILVFRRGHTPSIPAKGSGDLEKLESGHATTVLERSDPSMVHKGEGFQGSVSVFHWNNVCYDLEIKGKPRRILDNVDGWIKPGTLTALMGVSGAGKTTLLDCLANRRVGVGIVTGEMLVDGKVCDQSFQRKTGYAQQQDLHLETSTVREALTFSAFLRQPHSIPKADKLTYVEEVIKLLAMQDYADAVVGVIGEGLNVEQRKRLTLGVELVAKPPLLLFVDEPTSGLDSQTSWAVLDLLEKLSKAGQSILCTIHQPSAMLFQRFDRLLFLAEGGKPVYFGEIGNDSSTLIDYFERNGAKPCLPGSNPAEWMLEAVGAAPSISSEGDWPEIWRSSPEYQSVHHELARLKAVDIDQLSADKPDPTSYNEFAAPLWQQLVVVTQRAFLQSWRSPSYIYSKITLCIATSLFIGLVFFNAPLSIQGLQNQMFAIFEVMSIVGQLVDQQMPNFLTQRSLYEVRERPAKTYSWMVFMLSQIVTELPWSTLASVFMWALFYYPIGFHKNAQAAGQGTERGALMWLLFWQFLVWVSTFTHMCISFVDSADDGGNIANFLFVLAFFFCGVLASPSQMPRFWIFLYRASPLSYWVSAVLSTGFANVQVTCTDKEYTAFDPPKGSTCGEYMAEYISRAGGYVKDPQATESCGYCTIKDTNVFLAAVSSDYDTRWRNFGILWVYIGFNIAAALALYWIARMPKGKKRL.

A disordered region spans residues 1 to 26; that stretch reads MAPAIDSTVNDLQPNTPNPEKALSSQ. Positions 112–368 constitute an ABC transporter 1 domain; the sequence is LALPAMIRQL…FVNLGFECPA (257 aa). Asparagine 292 is a glycosylation site (N-linked (GlcNAc...) asparagine). 5 helical membrane-spanning segments follow: residues 476–496, 511–531, 557–577, 586–606, and 620–640; these read WPAVWVMVGNTIMALIMSSLF, VVLFMAILFNAFSSILEVMTL, VLVDMPMKITSTISFNLVFYF, GNFFFYLLVVFLIVLAMSGVF, and MVPASVLMLALLIFTGFVVPV. A glycan (N-linked (GlcNAc...) asparagine) is linked at asparagine 684. Residues 707 to 727 traverse the membrane as a helical segment; sequence VGIIIAMVIFNYLMYFIASEY. Residues 789–1032 form the ABC transporter 2 domain; it reads FHWNNVCYDL…TLIDYFERNG (244 aa). 825–832 serves as a coordination point for ATP; it reads GVSGAGKT. The N-linked (GlcNAc...) asparagine glycan is linked to asparagine 1019. The next 6 helical transmembrane spans lie at 1133–1153, 1213–1233, 1249–1269, 1278–1298, 1305–1325, and 1400–1420; these read ITLCIATSLFIGLVFFNAPLS, LPWSTLASVFMWALFYYPIGF, LMWLLFWQFLVWVSTFTHMCI, GGNIANFLFVLAFFFCGVLAS, FWIFLYRASPLSYWVSAVLST, and FGILWVYIGFNIAAALALYWI.

Belongs to the ABC transporter superfamily. ABCG family. PDR (TC 3.A.1.205) subfamily.

The protein resides in the cell membrane. ABC transporter; part of the gene cluster that mediates the biosynthesis of eupenifeldin, a bistropolone meroterpenoid that acts as an antitumor agent. This chain is ABC transporter eupT, found in Phoma sp.